A 330-amino-acid chain; its full sequence is Reaction center protein M chain (330 aa).

3 helical membrane-spanning segments follow: residues 57–83 (GWTSIVAFGTGIAWFVIVGFNMLAQVG), 115–144 (GGWYIIASFFLLVSVMTWLLRAYLLAEQHK), and 147–172 (KHIFWGFAAAVWLFLVLGLFRPILMG). H185 and H205 together coordinate (7R,8Z)-bacteriochlorophyll b. Residues 202–230 (NPFHCLSIVFLYGSVLLFCMHGGTILAVT) traverse the membrane as a helical segment. Fe cation-binding residues include H222 and E237. W255 contacts a ubiquinone. A helical transmembrane segment spans residues 264–290 (TMEGIHRWAWWFAVLTPITGGIGILLT). H269 is a binding site for Fe cation.

The protein belongs to the reaction center PufL/M/PsbA/D family. As to quaternary structure, reaction center is composed of four bacteriochlorophylls, two bacteriopheophytins, two ubiquinones, one iron, and two highly hydrophobic polypeptide chains (designated L and M).

The protein localises to the cellular chromatophore membrane. In terms of biological role, the reaction center is a membrane-bound complex that mediates the initial photochemical event in the electron transfer process of photosynthesis. The polypeptide is Reaction center protein M chain (pufM) (Roseobacter denitrificans (strain ATCC 33942 / OCh 114) (Erythrobacter sp. (strain OCh 114))).